The primary structure comprises 45 residues: Lysis protein for colicin E1 (45 aa).

Residues 1 to 17 (MRKRFFVGIFAINLLVG) form the signal peptide. Cysteine 18 carries N-palmitoyl cysteine lipidation. A lipid anchor (S-diacylglycerol cysteine) is attached at cysteine 18.

It localises to the cell outer membrane. In terms of biological role, lysis proteins are required for both colicin release and partial cell lysis. In Escherichia coli, this protein is Lysis protein for colicin E1 (lys).